A 340-amino-acid polypeptide reads, in one-letter code: Holliday junction branch migration complex subunit RuvB (340 aa).

The large ATPase domain (RuvB-L) stretch occupies residues 1-184; sequence MNENLDPTTK…FGISSRLQYY (184 aa). ATP-binding positions include Leu23, Arg24, Gly65, Lys68, Thr69, Thr70, 131 to 133, Arg174, Tyr184, and Arg221; that span reads EDF. Residue Thr69 participates in Mg(2+) binding. The small ATPAse domain (RuvB-S) stretch occupies residues 185–255; the sequence is STELLTTIVE…ISKYALKALN (71 aa). Positions 258 to 340 are head domain (RuvB-H); sequence AHGLDEMDNK…INTNIQGGLF (83 aa). DNA is bound by residues Arg313 and Arg318.

The protein belongs to the RuvB family. In terms of assembly, homohexamer. Forms an RuvA(8)-RuvB(12)-Holliday junction (HJ) complex. HJ DNA is sandwiched between 2 RuvA tetramers; dsDNA enters through RuvA and exits via RuvB. An RuvB hexamer assembles on each DNA strand where it exits the tetramer. Each RuvB hexamer is contacted by two RuvA subunits (via domain III) on 2 adjacent RuvB subunits; this complex drives branch migration. In the full resolvosome a probable DNA-RuvA(4)-RuvB(12)-RuvC(2) complex forms which resolves the HJ.

It is found in the cytoplasm. The catalysed reaction is ATP + H2O = ADP + phosphate + H(+). The RuvA-RuvB-RuvC complex processes Holliday junction (HJ) DNA during genetic recombination and DNA repair, while the RuvA-RuvB complex plays an important role in the rescue of blocked DNA replication forks via replication fork reversal (RFR). RuvA specifically binds to HJ cruciform DNA, conferring on it an open structure. The RuvB hexamer acts as an ATP-dependent pump, pulling dsDNA into and through the RuvAB complex. RuvB forms 2 homohexamers on either side of HJ DNA bound by 1 or 2 RuvA tetramers; 4 subunits per hexamer contact DNA at a time. Coordinated motions by a converter formed by DNA-disengaged RuvB subunits stimulates ATP hydrolysis and nucleotide exchange. Immobilization of the converter enables RuvB to convert the ATP-contained energy into a lever motion, pulling 2 nucleotides of DNA out of the RuvA tetramer per ATP hydrolyzed, thus driving DNA branch migration. The RuvB motors rotate together with the DNA substrate, which together with the progressing nucleotide cycle form the mechanistic basis for DNA recombination by continuous HJ branch migration. Branch migration allows RuvC to scan DNA until it finds its consensus sequence, where it cleaves and resolves cruciform DNA. This chain is Holliday junction branch migration complex subunit RuvB, found in Flavobacterium johnsoniae (strain ATCC 17061 / DSM 2064 / JCM 8514 / BCRC 14874 / CCUG 350202 / NBRC 14942 / NCIMB 11054 / UW101) (Cytophaga johnsonae).